Consider the following 553-residue polypeptide: Glycerol kinase 2 (553 aa).

Thr20 contributes to the substrate binding site. Arg24 contacts ATP. Substrate contacts are provided by Arg94, Tyr148, and Asp259. ATP is bound by residues Thr281, Gly326, and 427 to 431; that span reads GMTNN. Residues 526–546 traverse the membrane as a helical segment; that stretch reads IFSSMPLGFFIVSSMVMLIGA.

Belongs to the FGGY kinase family. Interacts with ARMC12 and PLD6.

It localises to the mitochondrion outer membrane. The protein localises to the cytoplasm. It catalyses the reaction glycerol + ATP = sn-glycerol 3-phosphate + ADP + H(+). It participates in polyol metabolism; glycerol degradation via glycerol kinase pathway; sn-glycerol 3-phosphate from glycerol: step 1/1. Key enzyme in the regulation of glycerol uptake and metabolism. Essential for male fertility and sperm mitochondrial sheath formation. Required for proper arrangement of crescent-like mitochondria to form the mitochondrial sheath during spermatogenesis. Can induce mitochondrial clustering through interactions with PLD6 and up-regulation of phosphatidic acid synthesis in the mitochondria. The polypeptide is Glycerol kinase 2 (GK2) (Macaca fascicularis (Crab-eating macaque)).